The primary structure comprises 266 residues: MNANSDKPLEANQEISEAKRKKIPNSFLACMSIISSLFVYSISEENEIKSSLALRFIVTSSTFSYVIFSFSSCLHANLMLWKSDIKESSVTQKILYFLVNIISVVLIVASLLSIVGIPINSWTYTKGPLTALFPSLVLFDYLASSLLNSALGAVSLTDSNNHLDLVLLLLSSFLITSREWDNDFECSLYLSIASSIILLIMSLEDEDALPSTEEPSFVARTKVVIFTIVLLLVAIIHVFLGCISIGIIVDAIKKGLFSMHNTNKRY.

Belongs to the UPF0328 family.

The polypeptide is UPF0328 protein ECU03_0130 (Encephalitozoon cuniculi (strain GB-M1) (Microsporidian parasite)).